The chain runs to 659 residues: Biosynthetic arginine decarboxylase 2 (659 aa).

An N6-(pyridoxal phosphate)lysine modification is found at Lys-119. 311-321 (LNVGGGLAVDY) is a substrate binding site.

It belongs to the Orn/Lys/Arg decarboxylase class-II family. SpeA subfamily. It depends on Mg(2+) as a cofactor. Pyridoxal 5'-phosphate serves as cofactor.

It catalyses the reaction L-arginine + H(+) = agmatine + CO2. Its function is as follows. Catalyzes the biosynthesis of agmatine from arginine. This Synechocystis sp. (strain ATCC 27184 / PCC 6803 / Kazusa) protein is Biosynthetic arginine decarboxylase 2 (speA2).